A 110-amino-acid chain; its full sequence is Inner kinetochore subunit mhf1 (110 aa).

Belongs to the TAF9 family. CENP-S/MHF1 subfamily. As to quaternary structure, the MHF histone-fold complex is a heterotetramer of 2 mhf1-mhf2 heterodimers. Component of the inner kinetochore constitutive centromere-associated network (CCAN) (also known as central kinetochore Sim4 complex in fission yeast), which is composed of at least cnl2, cnp3, cnp20, fta1, fta2, fta3, fta4, fta6, fta7, mal2, mhf1, mhf2, mis6, mis15, mis17, sim4 and wip1.

The protein resides in the nucleus. Component of a FANCM-MHF complex that promotes gene conversion at blocked replication forks, probably by reversal of the stalled fork. FANCM-MHF promotes non-crossover recombination. The chain is Inner kinetochore subunit mhf1 from Schizosaccharomyces pombe (strain 972 / ATCC 24843) (Fission yeast).